Reading from the N-terminus, the 647-residue chain is MIKITFPDGAVREFESGVTTFDIAESISKSLAKKALAGKFNDQLIDTTRAIEEDGSIEIVTPDHKDAYEVLRHSAAHLFAQAAKRLFPNLHLGVGPAIAEGFYYDTDNAEGQISNEDLPRIEAEMQKIVTENYPCIREEVTKEEALELFKDDPYKVELINEHAGAGLTVYRQGEFVDLCRGPHVPSTGRIQVFHLLNVAGAYWRGNSDNNMMQRIYGTAWFDKKDLKAYLTRLEEAKERDHRKLGKELDLFMISQEVGQGLPFWLPDGATIRRTLERYITDKELASGYQHVYTPPLASVELYKTSGHWDHYQEDMFPVMDMGDGEEFVLRPMNCPHHIQVYKNHVRSYRELPIRIAELGMMHRYEKSGALSGLQRVREMTLNDGHIFVTPEQIQEEFQRALQLIIDVYADFNLTDYRFRLSYRDPNDTHKYYDNDEMWENAQSMLKAALDEMGVDYFEAEGEAAFYGPKLDIQVKTALGNEETLSTIQLDFLLPERFDLKYIGADGEEHRPVMIHRGVISTMERFTAILIETYKGAFPTWLAPHQVTVIPISNEAHIDYAWEVAKTLRDRGVRADVDDRNEKMQYKIRASQTSKIPYQLIVGDKEMEDKSVNVRRYGSKATHTESVEEFVENILADIARKSRPDAQA.

The region spanning 1 to 61 is the TGS domain; it reads MIKITFPDGA…EEDGSIEIVT (61 aa). Positions 240–538 are catalytic; that stretch reads DHRKLGKELD…LIETYKGAFP (299 aa). Zn(2+)-binding residues include Cys334, His385, and His515.

It belongs to the class-II aminoacyl-tRNA synthetase family. In terms of assembly, homodimer. The cofactor is Zn(2+).

The protein localises to the cytoplasm. It catalyses the reaction tRNA(Thr) + L-threonine + ATP = L-threonyl-tRNA(Thr) + AMP + diphosphate + H(+). Its function is as follows. Catalyzes the attachment of threonine to tRNA(Thr) in a two-step reaction: L-threonine is first activated by ATP to form Thr-AMP and then transferred to the acceptor end of tRNA(Thr). Also edits incorrectly charged L-seryl-tRNA(Thr). This is Threonine--tRNA ligase from Streptococcus pyogenes serotype M18 (strain MGAS8232).